The sequence spans 296 residues: Transcription factor Pur-alpha 1 (296 aa).

N-acetylmethionine is present on Met1. Disordered stretches follow at residues 1–25 (MEAN…GGGG) and 186–214 (IPGH…EETG). The residue at position 207 (Ser207) is a Phosphoserine.

The protein belongs to the PUR DNA-binding protein family. Homodimer. Interacts with TCP20.

It is found in the nucleus. Functionally, transcription factor that specifically binds the purine-rich double-stranded telomeric repeated sequence 5'-AAACCCTAA-3' found in promoter telo boxes. The sequence is that of Transcription factor Pur-alpha 1 (PURA1) from Arabidopsis thaliana (Mouse-ear cress).